Here is a 472-residue protein sequence, read N- to C-terminus: NADH-quinone oxidoreductase subunit N (472 aa).

The next 14 membrane-spanning stretches (helical) occupy residues 11–31 (AELSLTAVFILMFLLDLFLPA), 43–63 (ILLTIQLLANLWPEEVTLFGG), 67–87 (STPMASVLKSILTIGTILVFL), 103–123 (GEFYILTLSTLLGMYFMVSAG), 125–145 (FLLFFLGLELATVPMACLVAF), 159–179 (FILSALFSSGIFLYGISMIYG), 200–220 (VLALVFFFSGLAFKLSLVPFH), 234–254 (VSAYLSVISKGAAAFALMIIL), 265–285 (WSEILCIIIVATITIANLFAI), 293–313 (FMAFSSISQAGYIMLAVLAGT), 318–338 (ASLVYYIVVYIAANLAVFGVI), 362–384 (PKLTMVMTLALFSLAGIPPFAGF), 401–421 (LIVFIALVNTIISLYYYLLIV), and 446–466 (LLVCVAGIFVLGIISGVYQLL).

Belongs to the complex I subunit 2 family. In terms of assembly, NDH-1 is composed of 14 different subunits. Subunits NuoA, H, J, K, L, M, N constitute the membrane sector of the complex.

The protein resides in the cell inner membrane. It carries out the reaction a quinone + NADH + 5 H(+)(in) = a quinol + NAD(+) + 4 H(+)(out). Functionally, NDH-1 shuttles electrons from NADH, via FMN and iron-sulfur (Fe-S) centers, to quinones in the respiratory chain. The immediate electron acceptor for the enzyme in this species is believed to be a menaquinone. Couples the redox reaction to proton translocation (for every two electrons transferred, four hydrogen ions are translocated across the cytoplasmic membrane), and thus conserves the redox energy in a proton gradient. In Phocaeicola vulgatus (strain ATCC 8482 / DSM 1447 / JCM 5826 / CCUG 4940 / NBRC 14291 / NCTC 11154) (Bacteroides vulgatus), this protein is NADH-quinone oxidoreductase subunit N.